The chain runs to 191 residues: Peptidyl-tRNA hydrolase (191 aa).

Tyr16 contacts tRNA. His21 serves as the catalytic Proton acceptor. Positions 66, 68, and 114 each coordinate tRNA.

The protein belongs to the PTH family. Monomer.

It localises to the cytoplasm. The enzyme catalyses an N-acyl-L-alpha-aminoacyl-tRNA + H2O = an N-acyl-L-amino acid + a tRNA + H(+). Functionally, hydrolyzes ribosome-free peptidyl-tRNAs (with 1 or more amino acids incorporated), which drop off the ribosome during protein synthesis, or as a result of ribosome stalling. Its function is as follows. Catalyzes the release of premature peptidyl moieties from peptidyl-tRNA molecules trapped in stalled 50S ribosomal subunits, and thus maintains levels of free tRNAs and 50S ribosomes. In Geotalea uraniireducens (strain Rf4) (Geobacter uraniireducens), this protein is Peptidyl-tRNA hydrolase.